Here is a 557-residue protein sequence, read N- to C-terminus: Dihydroxy-acid dehydratase (557 aa).

Aspartate 78 lines the Mg(2+) pocket. Cysteine 119 lines the [2Fe-2S] cluster pocket. Mg(2+) contacts are provided by aspartate 120 and lysine 121. Lysine 121 carries the post-translational modification N6-carboxylysine. Cysteine 192 is a binding site for [2Fe-2S] cluster. Residue glutamate 442 coordinates Mg(2+). The active-site Proton acceptor is serine 468.

This sequence belongs to the IlvD/Edd family. In terms of assembly, homodimer. It depends on [2Fe-2S] cluster as a cofactor. Mg(2+) is required as a cofactor.

The enzyme catalyses (2R)-2,3-dihydroxy-3-methylbutanoate = 3-methyl-2-oxobutanoate + H2O. The catalysed reaction is (2R,3R)-2,3-dihydroxy-3-methylpentanoate = (S)-3-methyl-2-oxopentanoate + H2O. Its pathway is amino-acid biosynthesis; L-isoleucine biosynthesis; L-isoleucine from 2-oxobutanoate: step 3/4. The protein operates within amino-acid biosynthesis; L-valine biosynthesis; L-valine from pyruvate: step 3/4. In terms of biological role, functions in the biosynthesis of branched-chain amino acids. Catalyzes the dehydration of (2R,3R)-2,3-dihydroxy-3-methylpentanoate (2,3-dihydroxy-3-methylvalerate) into 2-oxo-3-methylpentanoate (2-oxo-3-methylvalerate) and of (2R)-2,3-dihydroxy-3-methylbutanoate (2,3-dihydroxyisovalerate) into 2-oxo-3-methylbutanoate (2-oxoisovalerate), the penultimate precursor to L-isoleucine and L-valine, respectively. The protein is Dihydroxy-acid dehydratase of Bacillus mycoides (strain KBAB4) (Bacillus weihenstephanensis).